The sequence spans 360 residues: SVP1-like protein 2 (360 aa).

WD repeat units follow at residues Ala12 to Lys50, Ala191 to Glu231, and Leu236 to Glu275.

Belongs to the WD repeat PROPPIN family.

It is found in the vacuole membrane. The protein resides in the cytoplasmic vesicle membrane. Its function is as follows. Involved in mitochondrial or peroxisomal functions and amino acid signaling pathways. This chain is SVP1-like protein 2 (HSV2), found in Pichia angusta (Yeast).